Reading from the N-terminus, the 244-residue chain is DNA repair protein RecO (244 aa).

It belongs to the RecO family.

Its function is as follows. Involved in DNA repair and RecF pathway recombination. This is DNA repair protein RecO from Polynucleobacter asymbioticus (strain DSM 18221 / CIP 109841 / QLW-P1DMWA-1) (Polynucleobacter necessarius subsp. asymbioticus).